We begin with the raw amino-acid sequence, 365 residues long: Green-sensitive opsin P521 (365 aa).

Over Met-1–Val-51 the chain is Extracellular. Asn-33 is a glycosylation site (N-linked (GlcNAc...) asparagine). The chain crosses the membrane as a helical span at residues Tyr-52–Ala-76. Residues Thr-77 to Asn-88 are Cytoplasmic-facing. The chain crosses the membrane as a helical span at residues Trp-89 to Gln-113. The Extracellular segment spans residues Ile-114–Glu-128. A disulfide bridge links Cys-125 with Cys-202. The helical transmembrane segment at Gly-129–Trp-148 threads the bilayer. Topologically, residues Glu-149–Leu-167 are cytoplasmic. A helical transmembrane segment spans residues Ala-168 to Ser-191. Residues Arg-192–Ser-217 lie on the Extracellular side of the membrane. The helical transmembrane segment at Phe-218–Ile-245 threads the bilayer. The Cytoplasmic segment spans residues Arg-246–Arg-267. Residues Met-268–Ala-291 form a helical membrane-spanning segment. The Extracellular portion of the chain corresponds to Ala-292–His-299. A helical transmembrane segment spans residues Pro-300–Met-324. N6-(retinylidene)lysine is present on Lys-311. Residues Asn-325 to Ala-365 lie on the Cytoplasmic side of the membrane. The tract at residues Asp-342–Ala-365 is disordered. Residues Glu-345–Ala-365 show a composition bias toward low complexity.

This sequence belongs to the G-protein coupled receptor 1 family. Opsin subfamily. Post-translationally, phosphorylated on some or all of the serine and threonine residues present in the C-terminal region. In this lizard the color pigments are found in the rod-shaped photoreceptor cells which have been derived from ancestral cone-like photoreceptors.

It is found in the membrane. Its function is as follows. Visual pigments are the light-absorbing molecules that mediate vision. They consist of an apoprotein, opsin, covalently linked to cis-retinal. The polypeptide is Green-sensitive opsin P521 (Gekko gecko (Tokay gecko)).